The sequence spans 483 residues: MKEFWQTCVSRLEQELPPQQISAWIRPLVPLAYDEAQAVLRVAAPNRFKLDWVRKNFSHQIEALAAEWYQRPVQVQFELPSHSTTPRIPVTPRAAVAPVAPASAAPLAPAAPPVAAAYSAPPEPPAAPAQTSAAVDAANIVYERSRLNTDLTFENFVTGKANQLARAAALQVAENPGTSYNPLFLYGGVGLGKTHLIHAIGNAMVAAGTGVRVRYVHADQYVSDVVKAYQRKAFDDFKRYYHSLDLLLIDDIQFFSGKNRTQEEFFYAFEAMVAQRKQIIITSDTYPKELSGIDSRLISRFDSGLTVAIEPPELEMRVAILLRKAESEGVPMPEEVAFFIAKHLRSNVRELEGALRKVLAYARFHGREALNVDVCKEALKDLLSVSNGQITVENIQKTVADFYKIKVADMYSKRRPANIALPRQVAMYLAKELTQKSLPEIGDLFGGRDHTTVLHAVRKISDARAKQAELNHTLHVLEQTLKG.

Residues 1 to 71 form a domain I, interacts with DnaA modulators region; that stretch reads MKEFWQTCVS…EALAAEWYQR (71 aa). The tract at residues 71–145 is domain II; it reads RPVQVQFELP…DAANIVYERS (75 aa). The interval 146 to 362 is domain III, AAA+ region; it reads RLNTDLTFEN…GALRKVLAYA (217 aa). The ATP site is built by Gly190, Gly192, Lys193, and Thr194. Residues 363–483 form a domain IV, binds dsDNA region; the sequence is RFHGREALNV…LHVLEQTLKG (121 aa).

Belongs to the DnaA family. As to quaternary structure, oligomerizes as a right-handed, spiral filament on DNA at oriC.

It is found in the cytoplasm. Its function is as follows. Plays an essential role in the initiation and regulation of chromosomal replication. ATP-DnaA binds to the origin of replication (oriC) to initiate formation of the DNA replication initiation complex once per cell cycle. Binds the DnaA box (a 9 base pair repeat at the origin) and separates the double-stranded (ds)DNA. Forms a right-handed helical filament on oriC DNA; dsDNA binds to the exterior of the filament while single-stranded (ss)DNA is stabiized in the filament's interior. The ATP-DnaA-oriC complex binds and stabilizes one strand of the AT-rich DNA unwinding element (DUE), permitting loading of DNA polymerase. After initiation quickly degrades to an ADP-DnaA complex that is not apt for DNA replication. Binds acidic phospholipids. The sequence is that of Chromosomal replication initiator protein DnaA from Bordetella avium (strain 197N).